A 407-amino-acid chain; its full sequence is Imidazolonepropionase (407 aa).

Residues His72 and His74 each contribute to the Fe(3+) site. Residues His72 and His74 each coordinate Zn(2+). Arg81, Tyr144, and His177 together coordinate 4-imidazolone-5-propanoate. Tyr144 contacts N-formimidoyl-L-glutamate. His242 contacts Fe(3+). Residue His242 coordinates Zn(2+). Gln245 is a 4-imidazolone-5-propanoate binding site. Asp317 contributes to the Fe(3+) binding site. A Zn(2+)-binding site is contributed by Asp317. Asn319 and Gly321 together coordinate N-formimidoyl-L-glutamate. 4-imidazolone-5-propanoate is bound at residue Thr322.

The protein belongs to the metallo-dependent hydrolases superfamily. HutI family. Zn(2+) serves as cofactor. Requires Fe(3+) as cofactor.

The protein localises to the cytoplasm. The enzyme catalyses 4-imidazolone-5-propanoate + H2O = N-formimidoyl-L-glutamate. It participates in amino-acid degradation; L-histidine degradation into L-glutamate; N-formimidoyl-L-glutamate from L-histidine: step 3/3. In terms of biological role, catalyzes the hydrolytic cleavage of the carbon-nitrogen bond in imidazolone-5-propanoate to yield N-formimidoyl-L-glutamate. It is the third step in the universal histidine degradation pathway. This Rhizobium rhizogenes (Agrobacterium rhizogenes) protein is Imidazolonepropionase.